The sequence spans 777 residues: 1,4-alpha-glucan branching enzyme GlgB (777 aa).

The active-site Nucleophile is the D408. The active-site Proton donor is E461.

Belongs to the glycosyl hydrolase 13 family. GlgB subfamily. Monomer.

It catalyses the reaction Transfers a segment of a (1-&gt;4)-alpha-D-glucan chain to a primary hydroxy group in a similar glucan chain.. The protein operates within glycan biosynthesis; glycogen biosynthesis. In terms of biological role, catalyzes the formation of the alpha-1,6-glucosidic linkages in glycogen by scission of a 1,4-alpha-linked oligosaccharide from growing alpha-1,4-glucan chains and the subsequent attachment of the oligosaccharide to the alpha-1,6 position. The sequence is that of 1,4-alpha-glucan branching enzyme GlgB from Actinobacillus pleuropneumoniae serotype 3 (strain JL03).